A 370-amino-acid polypeptide reads, in one-letter code: MKIEAISTTIVDVPTRRPLQMSFTTVHKQSYVIVQVKAGGLVGIGEGGSVGGPTWGSESAETIKVIIDNYLAPLLVGKDASNLSQARVLMDRAVTGNLSAKAAIDIALHDLKARALNLSIADLIGGTMRTSIPIAWTLASGDTARDIDSALEMIETRRHNRFKVKLGARTPAQDLEHIRSIVKAVGDRASVRVDVNQGWDEQTASIWIPRLEEAGVELVEQPVPRANFGALRRLTEQNGVAILADESLSSLSSAFELARDHAVDAFSLKLCNMGGIANTLKVAAVAEAAGISSYGGTMLDSTVGTAAALHVYATLPSLPYGCELIGPWVLGDRLTQQDLEIKDFEVHLPLGSGLGVDLDHDKVRHYTRAA.

Lysine 165 (proton acceptor) is an active-site residue. Mn(2+)-binding residues include aspartate 194, glutamate 220, and aspartate 245. The active-site Proton donor is glutamate 323.

It belongs to the mandelate racemase/muconate lactonizing enzyme family. It depends on Mn(2+) as a cofactor.

It catalyses the reaction 2-[(2R)-2-chloro-2,5-dihydro-5-oxofuryl]acetate = 3-chloro-cis,cis-muconate + H(+). It functions in the pathway aromatic compound metabolism; 3-chlorocatechol degradation. In Pseudomonas sp. (strain P51), this protein is Chloromuconate cycloisomerase (tcbD).